We begin with the raw amino-acid sequence, 576 residues long: uncharacterized protein (576 aa).

The segment at 41–78 (EKESESKLNSKSTTLQSSDSEDWDSEENEDDITDVGVP) is disordered. The segment covering 49 to 58 (NSKSTTLQSS) has biased composition (low complexity). The segment covering 59–73 (DSEDWDSEENEDDIT) has biased composition (acidic residues). 5 WD repeats span residues 87 to 126 (GHSK…ATNP), 195 to 235 (GHIA…SQLE), 248 to 288 (LSRI…KRPV), 296 to 335 (LPQQ…KCVN), and 393 to 433 (TVTA…RGVK). Residues 547-576 (SETQPTPIYQGVTEGDISSEEGNPSKKQKR) form a disordered region.

This is an uncharacterized protein from Schizosaccharomyces pombe (strain 972 / ATCC 24843) (Fission yeast).